The following is a 339-amino-acid chain: DNA-directed RNA polymerase subunit alpha (339 aa).

The segment at 1 to 235 is alpha N-terminal domain (alpha-NTD); that stretch reads MVIQKNWQEL…DQLQVFVNFE (235 aa). Positions 251 to 339 are alpha C-terminal domain (alpha-CTD); that stretch reads FNPALLKKVD…DLAKRFEEHY (89 aa).

The protein belongs to the RNA polymerase alpha chain family. As to quaternary structure, homodimer. The RNAP catalytic core consists of 2 alpha, 1 beta, 1 beta' and 1 omega subunit. When a sigma factor is associated with the core the holoenzyme is formed, which can initiate transcription.

The enzyme catalyses RNA(n) + a ribonucleoside 5'-triphosphate = RNA(n+1) + diphosphate. Its function is as follows. DNA-dependent RNA polymerase catalyzes the transcription of DNA into RNA using the four ribonucleoside triphosphates as substrates. The sequence is that of DNA-directed RNA polymerase subunit alpha from Methylorubrum populi (strain ATCC BAA-705 / NCIMB 13946 / BJ001) (Methylobacterium populi).